A 634-amino-acid chain; its full sequence is Kelch-like protein 22 (634 aa).

Ala-2 is modified (N-acetylalanine). The 68-residue stretch at 50-117 (FDVVLVVEGR…IYTSELELSL (68 aa)) folds into the BTB domain. 6 Kelch repeats span residues 299 to 349 (CVVG…VLNN), 350 to 399 (FVYL…VVGR), 400 to 446 (YIYA…TLEG), 448 to 493 (MYVT…TLLD), 494 to 544 (KLYV…VLDT), and 545 to 593 (RIYV…VLTL). Thr-463 carries the post-translational modification Phosphothreonine. Residue Tyr-466 is modified to Phosphotyrosine. The segment at 600-634 (EPPRGTPDRSQADPDFASEVMSVSDWEEFDNSSED) is disordered. The residue at position 605 (Thr-605) is a Phosphothreonine. Positions 624-634 (DWEEFDNSSED) are enriched in acidic residues.

In terms of assembly, component of the BCR(KLHL22) E3 ubiquitin ligase complex, at least composed of CUL3, KLHL22 and RBX1. Interacts with PLK1. Interacts with DEPDC5 (via DEP domain); the interaction depends on amino acid availability. Interacts with YWHAE; required for the nuclear localization of KLHL22 upon amino acid starvation.

The protein localises to the cytoplasm. It localises to the cytosol. It is found in the cytoskeleton. The protein resides in the microtubule organizing center. Its subcellular location is the centrosome. The protein localises to the spindle. It localises to the nucleus. It is found in the lysosome. Its pathway is protein modification; protein ubiquitination. Functionally, substrate-specific adapter of a BCR (BTB-CUL3-RBX1) E3 ubiquitin ligase complex required for chromosome alignment and localization of PLK1 at kinetochores. The BCR(KLHL22) ubiquitin ligase complex mediates monoubiquitination of PLK1, leading to PLK1 dissociation from phosphoreceptor proteins and subsequent removal from kinetochores, allowing silencing of the spindle assembly checkpoint (SAC) and chromosome segregation. Monoubiquitination of PLK1 does not lead to PLK1 degradation. The BCR(KLHL22) ubiquitin ligase complex is also responsible for the amino acid-stimulated 'Lys-48' polyubiquitination and proteasomal degradation of DEPDC5. Through the degradation of DEPDC5, releases the GATOR1 complex-mediated inhibition of the TORC1 pathway. It is therefore an amino acid-dependent activator within the amino acid-sensing branch of the TORC1 pathway, indirectly regulating different cellular processes including cell growth and autophagy. This chain is Kelch-like protein 22 (KLHL22), found in Ailuropoda melanoleuca (Giant panda).